The primary structure comprises 76 residues: Conotoxin Cal5a L1 (76 aa).

A signal peptide spans methionine 1–alanine 22. Residues serine 23 to glutamine 42 constitute a propeptide that is removed on maturation. The residue at position 50 (proline 50) is a 4-hydroxyproline. At proline 58 the chain carries 4-hydroxyproline; in form cal5a, and form cal5b. Residue proline 62 is modified to 4-hydroxyproline; in form cal5a, form cal5b, and form cal5c. Proline 64 carries the post-translational modification 4-hydroxyproline; in form cal5a, form cal5b, form cal5c, and form cal5d.

Post-translationally, contains 2 disulfide bonds that can be either 'C1-C3, C2-C4' or 'C1-C4, C2-C3', since these disulfide connectivities have been observed for conotoxins with cysteine framework V (for examples, see AC P0DQQ7 and AC P81755). Five different peptides have been described after total venom examination by HPLC-MS. Cal5a is the longest. Cal5b-Cal5e are identical in length but are differentially hydroxylated. It is possible that hydroxylation and proteolysis at position 53 are incomplete in some of these peptides. Expressed by the venom duct.

It localises to the secreted. Its function is as follows. Probable neurotoxin with unknown target. Possibly targets ion channels. This is Conotoxin Cal5a L1 from Californiconus californicus (California cone).